The following is a 248-amino-acid chain: 1-(5-phosphoribosyl)-5-[(5-phosphoribosylamino)methylideneamino] imidazole-4-carboxamide isomerase (248 aa).

Residue aspartate 11 is the Proton acceptor of the active site. Aspartate 132 (proton donor) is an active-site residue.

The protein belongs to the HisA/HisF family.

Its subcellular location is the cytoplasm. The enzyme catalyses 1-(5-phospho-beta-D-ribosyl)-5-[(5-phospho-beta-D-ribosylamino)methylideneamino]imidazole-4-carboxamide = 5-[(5-phospho-1-deoxy-D-ribulos-1-ylimino)methylamino]-1-(5-phospho-beta-D-ribosyl)imidazole-4-carboxamide. The protein operates within amino-acid biosynthesis; L-histidine biosynthesis; L-histidine from 5-phospho-alpha-D-ribose 1-diphosphate: step 4/9. This Afipia carboxidovorans (strain ATCC 49405 / DSM 1227 / KCTC 32145 / OM5) (Oligotropha carboxidovorans) protein is 1-(5-phosphoribosyl)-5-[(5-phosphoribosylamino)methylideneamino] imidazole-4-carboxamide isomerase.